The following is a 179-amino-acid chain: Protein GrpE (179 aa).

Positions 1-20 are disordered; the sequence is MSEETKEEIKNEKVDEEVTE.

This sequence belongs to the GrpE family. Homodimer.

The protein resides in the cytoplasm. Functionally, participates actively in the response to hyperosmotic and heat shock by preventing the aggregation of stress-denatured proteins, in association with DnaK and GrpE. It is the nucleotide exchange factor for DnaK and may function as a thermosensor. Unfolded proteins bind initially to DnaJ; upon interaction with the DnaJ-bound protein, DnaK hydrolyzes its bound ATP, resulting in the formation of a stable complex. GrpE releases ADP from DnaK; ATP binding to DnaK triggers the release of the substrate protein, thus completing the reaction cycle. Several rounds of ATP-dependent interactions between DnaJ, DnaK and GrpE are required for fully efficient folding. The protein is Protein GrpE of Lactococcus lactis subsp. cremoris (strain MG1363).